Here is a 360-residue protein sequence, read N- to C-terminus: Protein phosphatase 1 regulatory subunit 7 (360 aa).

The tract at residues 1–64 (MAAERGAGQQ…GEEDPEEEHE (64 aa)) is disordered. At Ala2 the chain carries N-acetylalanine. A phosphoserine mark is found at Ser12, Ser24, Ser27, Ser44, and Ser47. Over residues 17–34 (EVDRRVESEESGDEEGKK) the composition is skewed to basic and acidic residues. The segment covering 53-63 (ERGEEDPEEEH) has biased composition (acidic residues). LRR repeat units lie at residues 77–98 (DAEDVDLNHYRIGKIEGFEVLK), 99–120 (KVKTLCLRQNLIKCIENLEELQ), 121–142 (SLRELDLYDNQIKKIENLEALT), 143–164 (ELEILDISFNLLRNIEGVDKLT), 165–186 (RLKKLFLVNNKISKIENLSNLH), 187–208 (QLQMLELGSNRIRAIENIDTLT), 209–230 (NLESLFLGKNKITKLQNLDALT), 231–252 (NLTVLSMQSNRLTKIEGLQNLV), 253–274 (NLRELYLSHNGIEVIEGLENNN), 275–296 (KLTMLDIASNRIKKIENISHLT), and 297–318 (ELQEFWMNDNLLESWSDLDELK). Ser322 is subject to Phosphoserine. The region spanning 331–360 (NPLQKDPQYRRKVMLALPSVRQIDATFVRF) is the LRRCT domain.

The protein belongs to the SDS22 family. As to quaternary structure, interacts with PPP1CA, PPP1CB and PPP1CC/PPP1G isoform 1. In terms of tissue distribution, widely expressed.

The protein localises to the nucleus. Regulatory subunit of protein phosphatase 1. The chain is Protein phosphatase 1 regulatory subunit 7 (PPP1R7) from Homo sapiens (Human).